The primary structure comprises 342 residues: N-acetyl-gamma-glutamyl-phosphate reductase (342 aa).

Residue Cys-146 is part of the active site.

It belongs to the NAGSA dehydrogenase family. Type 1 subfamily.

Its subcellular location is the cytoplasm. It catalyses the reaction N-acetyl-L-glutamate 5-semialdehyde + phosphate + NADP(+) = N-acetyl-L-glutamyl 5-phosphate + NADPH + H(+). It participates in amino-acid biosynthesis; L-arginine biosynthesis; N(2)-acetyl-L-ornithine from L-glutamate: step 3/4. Its function is as follows. Catalyzes the NADPH-dependent reduction of N-acetyl-5-glutamyl phosphate to yield N-acetyl-L-glutamate 5-semialdehyde. In Streptomyces avermitilis (strain ATCC 31267 / DSM 46492 / JCM 5070 / NBRC 14893 / NCIMB 12804 / NRRL 8165 / MA-4680), this protein is N-acetyl-gamma-glutamyl-phosphate reductase.